Reading from the N-terminus, the 245-residue chain is 1-(5-phosphoribosyl)-5-[(5-phosphoribosylamino)methylideneamino] imidazole-4-carboxamide isomerase (245 aa).

Catalysis depends on Asp-7, which acts as the Proton acceptor. Asp-129 (proton donor) is an active-site residue.

This sequence belongs to the HisA/HisF family.

It localises to the cytoplasm. It carries out the reaction 1-(5-phospho-beta-D-ribosyl)-5-[(5-phospho-beta-D-ribosylamino)methylideneamino]imidazole-4-carboxamide = 5-[(5-phospho-1-deoxy-D-ribulos-1-ylimino)methylamino]-1-(5-phospho-beta-D-ribosyl)imidazole-4-carboxamide. It participates in amino-acid biosynthesis; L-histidine biosynthesis; L-histidine from 5-phospho-alpha-D-ribose 1-diphosphate: step 4/9. This is 1-(5-phosphoribosyl)-5-[(5-phosphoribosylamino)methylideneamino] imidazole-4-carboxamide isomerase from Escherichia coli O17:K52:H18 (strain UMN026 / ExPEC).